A 400-amino-acid polypeptide reads, in one-letter code: Forkhead box protein A4-B (400 aa).

Residues 119–213 (KPPYSYISLI…ENGCYLRRQK (95 aa)) constitute a DNA-binding region (fork-head). Basic and acidic residues predominate over residues 218–234 (ERSKSGEGERKGNKPGD). The disordered stretch occupies residues 218–290 (ERSKSGEGER…VGFSPTSEQA (73 aa)). Composition is skewed to polar residues over residues 249 to 258 (DCSSSRSPQA) and 267 to 277 (STGSSIHQATG).

As to expression, primarily expressed in the dorsal blastopore lip (Spemann organizer) of early gastrulae. At later stages, expressed in the dorsal mesoderm and the neural floor plate. In the dorsal mesoderm, expressed in the notochord but not in the presomitic mesoderm. Also expressed in the mid-brain area.

It is found in the nucleus. Functionally, transcriptional repressor involved in embryonic nervous system development. Plays a role in the induction and patterning of the anterior-posterior neural axis. Involved in the establishment of floor plate differentiation from neural plate cells during gastrulation. Binds the anf1 promoter sequence to restrict expression of anf1 to the anterior of the neural plate, thereby patterning the forebrain. Can bind to the HNF-3-alpha DNA target sequence. Cooperates with t/bra in a dose-dependent manner to specify dorsal mesoderm formation, including notochord. May be involved in the dorso-ventral patterning of the mesoderm. Binds to DNA via the target sequence 5'-[GA]TAAA[TC]A-3', with 5'-GTAAATA-3' being the preferred binding site. This Xenopus laevis (African clawed frog) protein is Forkhead box protein A4-B (foxa4-b).